The chain runs to 269 residues: Protein MrkE (269 aa).

Positions 59–173 (KVIIVEDEFL…RIINMLQKLT (115 aa)) constitute a Response regulatory domain. Asp110 bears the 4-aspartylphosphate mark. The region spanning 197–269 (INLIKDERII…VAQVSIANRF (73 aa)) is the HTH LytTR-type domain.

May be involved in the regulation of fimbrial expression. The protein is Protein MrkE (mrkE) of Klebsiella pneumoniae.